Consider the following 125-residue polypeptide: Large ribosomal subunit protein uL24 (125 aa).

It belongs to the universal ribosomal protein uL24 family. Part of the 50S ribosomal subunit.

Its function is as follows. One of two assembly initiator proteins, it binds directly to the 5'-end of the 23S rRNA, where it nucleates assembly of the 50S subunit. Functionally, one of the proteins that surrounds the polypeptide exit tunnel on the outside of the subunit. The polypeptide is Large ribosomal subunit protein uL24 (Mycoplasma mobile (strain ATCC 43663 / 163K / NCTC 11711) (Mesomycoplasma mobile)).